The primary structure comprises 376 residues: Cytochrome b (376 aa).

Helical transmembrane passes span 28-48 (YGFLLGIIFFIQILTGVFLAS), 72-94 (WCFRYMHATGASLVFFLTYLHIL), 107-127 (SWISGLIIFALFIVTAFIGYV), and 169-189 (FFVLHFILPFVALCIVFIHIF). Heme b contacts are provided by His-78 and His-92. 2 residues coordinate heme b: His-173 and His-187. His-192 contacts a ubiquinone. 4 helical membrane-spanning segments follow: residues 214 to 234 (LLSLDVKGFNNILILFLIQSI), 274 to 294 (IPSKNAGLVIVIASLQLLFLL), 317 to 337 (VPIIWFMCSFYALLWIGCPLP), and 340 to 360 (IFILYGRLFIILFFSSGLFSL).

Belongs to the cytochrome b family. The main subunits of complex b-c1 are: cytochrome b, cytochrome c1 and the Rieske protein. Heme b is required as a cofactor.

The protein resides in the mitochondrion inner membrane. In terms of biological role, component of the ubiquinol-cytochrome c reductase complex (complex III or cytochrome b-c1 complex) that is part of the mitochondrial respiratory chain. The b-c1 complex mediates electron transfer from ubiquinol to cytochrome c. Contributes to the generation of a proton gradient across the mitochondrial membrane that is then used for ATP synthesis. The protein is Cytochrome b (MT-CYB) of Plasmodium berghei.